The sequence spans 418 residues: Calreticulin (418 aa).

The signal sequence occupies residues 1–17; it reads MLLPVPLLLGLLGLAAA. The tract at residues 18–197 is N-domain; sequence EPVVYFKEQF…NSQVESGSLE (180 aa). Residue Q26 coordinates Ca(2+). K48 carries the N6-acetyllysine modification. Ca(2+)-binding residues include K62 and K64. K64 is modified (N6-(2-hydroxyisobutyryl)lysine). C105 and C137 are disulfide-bonded. An alpha-D-glucoside-binding residues include Y109, K111, Y128, and D135. An N6-acetyllysine modification is found at K159. The stretch at 191 to 202 is one 1-1 repeat; sequence VESGSLEDDWDF. A 4 X approximate repeats region spans residues 191–255; it reads VESGSLEDDW…DAKKPEDWDE (65 aa). The tract at residues 193 to 277 is disordered; the sequence is SGSLEDDWDF…NPEYKGEWKP (85 aa). Residues 198–308 form a P-domain region; the sequence is DDWDFLPPKK…YSPDANIYAY (111 aa). Residues 207–251 are compositionally biased toward basic and acidic residues; it reads KIKDPDASKPEDWDERAKIDDPTDSKPEDWDKPEHIPDPDAKKPE. K209 carries the N6-acetyllysine modification. Tandem repeats lie at residues 210-221, 227-238, 244-255, 259-269, 273-283, and 287-297. The interval 237-270 is interaction with PPIB; that stretch reads DKPEHIPDPDAKKPEDWDEEMDGEWEPPVIQNPE. Residues 252–261 show a composition bias toward acidic residues; it reads DWDEEMDGEW. Positions 259-297 are 3 X approximate repeats; it reads GEWEPPVIQNPEYKGEWKPRQIDNPDYKGTWIHPEIDNP. Residues 309–418 are C-domain; that stretch reads DSFAVLGLDL…AAAGQAKDEL (110 aa). Residue D317 coordinates an alpha-D-glucoside. D328 is a binding site for Ca(2+). The segment at 349–418 is disordered; it reads VTKTAEKQMK…AAAGQAKDEL (70 aa). Residues 352–379 are compositionally biased toward basic and acidic residues; that stretch reads TAEKQMKDKQDEEQRLKEEEEEKKRKEE. The span at 380-409 shows a compositional bias: acidic residues; it reads EEAEEDEEDKDDKEDEDEDEEDKDEEEEEA. The Prevents secretion from ER signature appears at 415 to 418; the sequence is KDEL.

The protein belongs to the calreticulin family. Monomer. Component of an EIF2 complex at least composed of CELF1/CUGBP1, CALR, CALR3, EIF2S1, EIF2S2, HSP90B1 and HSPA5. Interacts with PDIA3/ERp57 and SPACA9. Interacts with TRIM21. Interacts with NR3C1. Interacts with PPIB. Interacts (via P-domain) with PDIA5. Interacts with CLCC1.

It localises to the endoplasmic reticulum lumen. The protein resides in the cytoplasm. The protein localises to the cytosol. Its subcellular location is the secreted. It is found in the extracellular space. It localises to the extracellular matrix. The protein resides in the cell surface. The protein localises to the sarcoplasmic reticulum lumen. Its subcellular location is the cytoplasmic vesicle. It is found in the secretory vesicle. It localises to the cortical granule. The protein resides in the cytolytic granule. Its function is as follows. Calcium-binding chaperone that promotes folding, oligomeric assembly and quality control in the endoplasmic reticulum (ER) via the calreticulin/calnexin cycle. This lectin interacts transiently with almost all of the monoglucosylated glycoproteins that are synthesized in the ER. Interacts with the DNA-binding domain of NR3C1 and mediates its nuclear export. Involved in maternal gene expression regulation. May participate in oocyte maturation via the regulation of calcium homeostasis. Present in the cortical granules of non-activated oocytes, is exocytosed during the cortical reaction in response to oocyte activation and might participate in the block to polyspermy. This Oryctolagus cuniculus (Rabbit) protein is Calreticulin (CALR).